Consider the following 330-residue polypeptide: Aspartate--ammonia ligase (330 aa).

This sequence belongs to the class-II aminoacyl-tRNA synthetase family. AsnA subfamily.

It localises to the cytoplasm. The enzyme catalyses L-aspartate + NH4(+) + ATP = L-asparagine + AMP + diphosphate + H(+). It participates in amino-acid biosynthesis; L-asparagine biosynthesis; L-asparagine from L-aspartate (ammonia route): step 1/1. This is Aspartate--ammonia ligase from Actinobacillus succinogenes (strain ATCC 55618 / DSM 22257 / CCUG 43843 / 130Z).